Here is a 423-residue protein sequence, read N- to C-terminus: Limonoid 21-O-acetyltransferse (423 aa).

Residues His-152 and Asp-362 each act as proton acceptor in the active site.

This sequence belongs to the plant acyltransferase family. As to quaternary structure, monomer. Mainly expressed in petioles.

It carries out the reaction isomeliandiol + acetyl-CoA = 21-O-acetyl-isomeliandiol + CoA. It participates in secondary metabolite biosynthesis; terpenoid biosynthesis. Acetyltransferase involved in the biosynthesis of limonoids triterpene natural products such as azadirachtin, an antifeedant widely used as bioinsecticide, and possessing many medicinal applications including anti-tumoral, anti-malarial, anti-rheumatic, antibacterial, anti-inflammatory, anti-pyretic and diuretic effects. Catalyzes the formation of 21-O-acetyl-isomeliandiol from isomeliandiol. This chain is Limonoid 21-O-acetyltransferse, found in Melia azedarach (Chinaberry tree).